A 271-amino-acid polypeptide reads, in one-letter code: Tryptophan synthase alpha chain (271 aa).

Catalysis depends on proton acceptor residues Glu49 and Asp60.

It belongs to the TrpA family. In terms of assembly, tetramer of two alpha and two beta chains.

It catalyses the reaction (1S,2R)-1-C-(indol-3-yl)glycerol 3-phosphate + L-serine = D-glyceraldehyde 3-phosphate + L-tryptophan + H2O. It participates in amino-acid biosynthesis; L-tryptophan biosynthesis; L-tryptophan from chorismate: step 5/5. The alpha subunit is responsible for the aldol cleavage of indoleglycerol phosphate to indole and glyceraldehyde 3-phosphate. In Aromatoleum aromaticum (strain DSM 19018 / LMG 30748 / EbN1) (Azoarcus sp. (strain EbN1)), this protein is Tryptophan synthase alpha chain.